We begin with the raw amino-acid sequence, 212 residues long: EFC-associated protein OPG053 (212 aa).

Residues 1 to 175 are Virion surface-facing; that stretch reads MAETKEFKTL…IIENRLPYYD (175 aa). Intrachain disulfides connect Cys-33/Cys-55, Cys-47/Cys-127, and Cys-107/Cys-149. A helical transmembrane segment spans residues 176–196; sequence PWFLVGVAIILVIFTVAICSI. At 197-212 the chain is on the intravirion side; it reads RRNLALKYRYGTFLYV.

Belongs to the orthopoxvirus OPG053 family. As to quaternary structure, component of the entry fusion complex (EFC) composed of OPG053, OPG076, OPG086, OPG094, OPG095, OPG099, OPG107, OPG143, OPG104, OPG147 and OPG155. Except for OPG095 and OPG052, each of the EFC proteins is required for assembly or stability of the complex. Disulfid bonds are oxidized in the cytoplasm by OPG088 protein. In terms of processing, unglycosylated because produced in viral factories instead of the classic ER -Golgi route.

The protein resides in the virion membrane. Its function is as follows. Component of the entry fusion complex (EFC), which consists of 11 proteins. During cell infection, this complex mediates entry of the virion core into the host cytoplasm by a two-step mechanism consisting of lipid mixing of the viral and cellular membranes and subsequent pore formation. This chain is EFC-associated protein OPG053 (OPG053), found in Monkeypox virus.